We begin with the raw amino-acid sequence, 104 residues long: Nucleoid-associated protein jk2011 (104 aa).

Belongs to the YbaB/EbfC family. In terms of assembly, homodimer.

It is found in the cytoplasm. It localises to the nucleoid. Binds to DNA and alters its conformation. May be involved in regulation of gene expression, nucleoid organization and DNA protection. The polypeptide is Nucleoid-associated protein jk2011 (Corynebacterium jeikeium (strain K411)).